A 244-amino-acid chain; its full sequence is Tegument protein UL51 homolog (244 aa).

Residue C10 is the site of S-palmitoyl cysteine; by host attachment.

It belongs to the herpesviridae UL51 family. Oligomerizes. Interacts with ORF55; this interaction mediates ORF55 incorporation to virions. Post-translationally, phosphorylated. Palmitoylation is necessary for Golgi localization.

It localises to the virion tegument. The protein resides in the host cytoplasm. It is found in the host Golgi apparatus. Plays several roles during the time course of infection, including egress of virus particles from the perinuclear space and secondary envelopment of cytoplasmic capsids that bud into specific trans-Golgi network (TGN)-derived membranes. This chain is Tegument protein UL51 homolog (8), found in Equus caballus (Horse).